The primary structure comprises 100 residues: NADH-quinone oxidoreductase subunit K (100 aa).

3 helical membrane passes run 4 to 24 (LQHG…GLII), 28 to 48 (LLFM…AFVV), and 60 to 80 (VMYI…LALL).

This sequence belongs to the complex I subunit 4L family. In terms of assembly, NDH-1 is composed of 13 different subunits. Subunits NuoA, H, J, K, L, M, N constitute the membrane sector of the complex.

The protein localises to the cell inner membrane. The catalysed reaction is a quinone + NADH + 5 H(+)(in) = a quinol + NAD(+) + 4 H(+)(out). In terms of biological role, NDH-1 shuttles electrons from NADH, via FMN and iron-sulfur (Fe-S) centers, to quinones in the respiratory chain. The immediate electron acceptor for the enzyme in this species is believed to be ubiquinone. Couples the redox reaction to proton translocation (for every two electrons transferred, four hydrogen ions are translocated across the cytoplasmic membrane), and thus conserves the redox energy in a proton gradient. The chain is NADH-quinone oxidoreductase subunit K from Yersinia enterocolitica serotype O:8 / biotype 1B (strain NCTC 13174 / 8081).